The primary structure comprises 268 residues: Sexual development regulator velC (268 aa).

Over residues 1-13 (MPHGFDKLLHPEP) the composition is skewed to basic and acidic residues. 2 disordered regions span residues 1–124 (MPHG…DNFS) and 142–165 (DPDPNSAPAHPSSISDPHISNPPH). A compositionally biased stretch (pro residues) spans 14 to 26 (EPQSPSPPPPPRR). The 230-residue stretch at 28–257 (STQSRYHLHI…ELGFVELKTR (230 aa)) folds into the Velvet domain. Positions 92–121 (DGNRDREREREHERERERERETDGVARTDD) are enriched in basic and acidic residues.

The protein belongs to the velvet family. VelC subfamily. As to quaternary structure, interacts with velA and vosA.

It is found in the nucleus. In terms of biological role, velvet-domain-containing protein that acts as a positive regulator of sexual development. This Penicillium rubens (strain ATCC 28089 / DSM 1075 / NRRL 1951 / Wisconsin 54-1255) (Penicillium chrysogenum) protein is Sexual development regulator velC.